Here is a 188-residue protein sequence, read N- to C-terminus: ATP synthase subunit delta (188 aa).

It belongs to the ATPase delta chain family. F-type ATPases have 2 components, F(1) - the catalytic core - and F(0) - the membrane proton channel. F(1) has five subunits: alpha(3), beta(3), gamma(1), delta(1), epsilon(1). F(0) has three main subunits: a(1), b(2) and c(10-14). The alpha and beta chains form an alternating ring which encloses part of the gamma chain. F(1) is attached to F(0) by a central stalk formed by the gamma and epsilon chains, while a peripheral stalk is formed by the delta and b chains.

It is found in the cell inner membrane. F(1)F(0) ATP synthase produces ATP from ADP in the presence of a proton or sodium gradient. F-type ATPases consist of two structural domains, F(1) containing the extramembraneous catalytic core and F(0) containing the membrane proton channel, linked together by a central stalk and a peripheral stalk. During catalysis, ATP synthesis in the catalytic domain of F(1) is coupled via a rotary mechanism of the central stalk subunits to proton translocation. In terms of biological role, this protein is part of the stalk that links CF(0) to CF(1). It either transmits conformational changes from CF(0) to CF(1) or is implicated in proton conduction. This Rhizobium leguminosarum bv. trifolii (strain WSM2304) protein is ATP synthase subunit delta.